A 284-amino-acid polypeptide reads, in one-letter code: Cuticle collagen dpy-5 (284 aa).

The tract at residues 88–284 (GLPSQGCPAG…PCPERKRRRV (197 aa)) is disordered. Triple-helical region stretches follow at residues 94-126 (CPAGAPGNPGAPGEPGGTGPDGKNGPTGLPGLN) and 143-270 (GPPG…VGAD). The segment covering 106 to 115 (GEPGGTGPDG) has biased composition (gly residues). Positions 163–177 (AGKRGTPGKDGEPGR) are enriched in basic and acidic residues. 3 stretches are compositionally biased toward low complexity: residues 181–193 (IGDQGTPGQDGQP), 224–246 (EPGNNGNPGEEGQTGAQGPTGQP), and 255–271 (DGTPGQAGPQGAVGADA).

The protein belongs to the cuticular collagen family. In terms of assembly, collagen polypeptide chains are complexed within the cuticle by disulfide bonds and other types of covalent cross-links. May be a substrate of bli-4.

Its function is as follows. Nematode cuticles are composed largely of collagen-like proteins. The cuticle functions both as an exoskeleton and as a barrier to protect the worm from its environment. This Caenorhabditis elegans protein is Cuticle collagen dpy-5 (dpy-5).